The following is a 62-amino-acid chain: Potassium channel toxin gamma-KTx 1.1 (62 aa).

A signal peptide spans 1–20 (MKVLILIMIIASLMIMGVEM). Intrachain disulfides connect C25/C43, C31/C54, C40/C59, and C44/C61.

Belongs to the ergtoxin family. Gamma-KTx 1 subfamily. Post-translationally, after protein storage at -20 Celsius degrees during a couple of months, the Met-55 of a small number of toxins is naturally oxidized. This oxidized form is about three orders of magnitude less efficient (IC(50)=15 uM) than non-oxidized form. In terms of tissue distribution, expressed by the venom gland.

It is found in the secreted. Functionally, blocks human and rat Kv11.1/KCNH2/ERG1 and Kv11.3/KCNH7/ERG3, as well as rat (but not human) Kv11.2/KCNH6/ERG2 by binding to channel outer vestibule (S5P domain) with a 1:1 stoichiometry. Inhibition data are the following: hERG1 (reversible, IC(50)~7 nM), rERG1 (reversible, Kd=6.8 nM), rERG2 (irreversible, Kd=2.8 nM), hERG3 (irreversible, Kd=4.05 nM) and rERG3 (reversible, Kd=38.1 nM) potassium channels. The toxin potency is not affected by elevating potassium ion concentration from 2 to 98 mM. This toxin only blocks channels in a closed state. At high toxin concentrations, block of Kv11.1/KCNH2/ERG1 macroscopic current is incomplete (93.5%). This suggests a kinetic mechanism model with two different states of toxin-channel binding (T+C=TC*=TC; in the TC* state, the toxin binds the channel but does not occlude the pore, whereas in the TC state the toxin binds and occludes the pore). In this model, incomplete block is explained by the relatively fast dissociation rate from the blocked channel conformation (TC) relative to the rate of conversion of the toxin-channel encounter complex (TC*) to the blocked channel conformation (TC). The polypeptide is Potassium channel toxin gamma-KTx 1.1 (Centruroides noxius (Mexican scorpion)).